Here is a 657-residue protein sequence, read N- to C-terminus: Polycomb protein suz12-A (657 aa).

Residues 335 to 363 form a disordered region; it reads TAPVAKPLATRNSESSTVDSSKTSNIKPP. Residues 347–358 are compositionally biased toward low complexity; that stretch reads SESSTVDSSKTS. Residues 413-436 form a C2H2-type zinc finger; sequence LHCPWCTLNCRKLYSLLKHLKLSH. The interval 528-604 is VEFS-box; it reads RLYFHSDSCT…NQMNQACMSF (77 aa).

It belongs to the VEFS (VRN2-EMF2-FIS2-SU(Z)12) family. Component of the prc2/eed-ezh2 complex.

Its subcellular location is the nucleus. Polycomb group (PcG) protein. Component of the prc2/eed-ezh2 complex, which methylates 'Lys-9' and 'Lys-27' of histone H3, leading to transcriptional repression of the affected target gene. The chain is Polycomb protein suz12-A (suz12a) from Danio rerio (Zebrafish).